The primary structure comprises 293 residues: Epimerase family protein SDR39U1 (293 aa).

NADP(+) is bound by residues 31 to 32, 58 to 59, E77, R82, and V160; these read SR and LA.

This sequence belongs to the NAD(P)-dependent epimerase/dehydratase family. SDR39U1 subfamily. Expressed in adrenal gland.

Its function is as follows. Putative NADP-dependent oxidoreductase. The chain is Epimerase family protein SDR39U1 (SDR39U1) from Homo sapiens (Human).